We begin with the raw amino-acid sequence, 387 residues long: MFIDLTPEQRQLQAEIRQYFSNLISPDERTEMEKDRHGPAYRAVIRRMGRDGRLGVGWPKEFGGLGFGPIEQQIFVNEAHRADVPLPAVTLQTVGPTLQAHGSELQKKKFLPAILAGEAHFAIGYTEPEAGTDLASLRTTAVRDGDHYIVNGQKVFTTGAHDADYIWLACRTDPNAAKHKGISILIVDTKDPGYSWTPIILADGAHHTNATYYNDVRVPVDMLVGKENDGWRLITTQLNNERVMLGPAGRFASIYDRVHAWASVPGGNGVTPIDHDDVKRALGEIRAIWRINELLNWQVASAGEDINMADAAATKVFGTERVQRAGRLAEEIVGKYGNPAEPDTAELLRWLDAQTKRNLVITFGGGVNEVMREMIAASGLKVPRVPR.

Residues I123 to T126, T132, and T158 each bind FAD. E241 (proton acceptor) is an active-site residue. V367–E369 is a binding site for FAD.

This sequence belongs to the acyl-CoA dehydrogenase family. Heterotetramer composed of FadE28 and FadE29. FAD serves as cofactor.

It catalyses the reaction 3-oxochol-4-en-22-oyl-CoA + A = 3-oxochola-4,17-dien-22-oyl-CoA + AH2. The protein operates within steroid metabolism; cholesterol degradation. Its function is as follows. Involved in the third cycle of side chain dehydrogenation in the beta-oxidation of cholesterol catabolism. Contributes partly to the virulence by increasing the efficiency of beta-oxidation. Catalyzes the dehydrogenation of 2'-propanoyl-CoA ester side chains of 3-oxo-4-pregnene-20-carboxyl-CoA (3-OPC-CoA) to yield 3-oxo-4,17-pregnadiene-20-carboxyl-CoA (3-OPDC-CoA). Also able to dehydrogenate steroyl-CoA such as 3-oxo-chol-4-en-24-oyl-CoA (3-OCO-CoA), 1beta-(2'-propanoyl-CoA)-3a-alpha-H- 7a-beta-methylhexahydro-4-indanone (indanone-CoA ester), hexahydroindanone and pregenenone. The sequence is that of Acyl-CoA dehydrogenase FadE29 (fadE29) from Mycobacterium tuberculosis (strain ATCC 25618 / H37Rv).